A 446-amino-acid chain; its full sequence is Phosphoglucosamine mutase (446 aa).

Ser-100 serves as the catalytic Phosphoserine intermediate. Residues Ser-100, Asp-239, Asp-241, and Asp-243 each contribute to the Mg(2+) site. Ser-100 carries the post-translational modification Phosphoserine.

It belongs to the phosphohexose mutase family. It depends on Mg(2+) as a cofactor. Activated by phosphorylation.

The catalysed reaction is alpha-D-glucosamine 1-phosphate = D-glucosamine 6-phosphate. Catalyzes the conversion of glucosamine-6-phosphate to glucosamine-1-phosphate. The chain is Phosphoglucosamine mutase from Shouchella clausii (strain KSM-K16) (Alkalihalobacillus clausii).